Consider the following 290-residue polypeptide: N-acetylmannosamine kinase (290 aa).

ATP is bound by residues 6-13 and 132-139; these read ALDIGGTK and GVGGGIIL. Residues His156, Cys166, Cys168, and Cys173 each contribute to the Zn(2+) site.

This sequence belongs to the ROK (NagC/XylR) family. NanK subfamily. In terms of assembly, homodimer.

It catalyses the reaction an N-acyl-D-mannosamine + ATP = an N-acyl-D-mannosamine 6-phosphate + ADP + H(+). Its pathway is amino-sugar metabolism; N-acetylneuraminate degradation; D-fructose 6-phosphate from N-acetylneuraminate: step 2/5. Catalyzes the phosphorylation of N-acetylmannosamine (ManNAc) to ManNAc-6-P. This Yersinia pseudotuberculosis serotype O:3 (strain YPIII) protein is N-acetylmannosamine kinase.